We begin with the raw amino-acid sequence, 522 residues long: Maturase K (522 aa).

It belongs to the intron maturase 2 family. MatK subfamily.

It localises to the plastid. The protein resides in the chloroplast. Usually encoded in the trnK tRNA gene intron. Probably assists in splicing its own and other chloroplast group II introns. The polypeptide is Maturase K (Aristea glauca).